Here is a 914-residue protein sequence, read N- to C-terminus: Beta-mannosidase A (914 aa).

Positions 1–20 are cleaved as a signal peptide; the sequence is MRFTATAAALVASSIPATLG. N-linked (GlcNAc...) asparagine glycosylation is found at N39, N79, N230, N265, N299, N309, and N330. E462 (proton donor) is an active-site residue. N591, N614, N641, N721, N744, N773, N784, and N909 each carry an N-linked (GlcNAc...) asparagine glycan.

It belongs to the glycosyl hydrolase 2 family. Beta-mannosidase A subfamily. Homodimer.

It is found in the secreted. It catalyses the reaction Hydrolysis of terminal, non-reducing beta-D-mannose residues in beta-D-mannosides.. It participates in glycan metabolism; N-glycan degradation. In terms of biological role, exoglycosidase that cleaves the single beta-linked mannose residue from the non-reducing end of beta-mannosidic oligosaccharides of various complexity and length. Involved in the degradation of polymeric mannan and galactomannan. The sequence is that of Beta-mannosidase A (mndA) from Aspergillus flavus (strain ATCC 200026 / FGSC A1120 / IAM 13836 / NRRL 3357 / JCM 12722 / SRRC 167).